The primary structure comprises 115 residues: uncharacterized protein (115 aa).

A compositionally biased stretch (basic residues) spans Thr-90 to Arg-100. Positions Thr-90 to Gly-115 are disordered.

This is an uncharacterized protein from Saccharomyces cerevisiae (strain ATCC 204508 / S288c) (Baker's yeast).